We begin with the raw amino-acid sequence, 669 residues long: DNA mismatch repair protein MutL (669 aa).

The disordered stretch occupies residues 357–379 (EQRQNTENNQEKTFSSEESNSKS). Positions 361–379 (NTENNQEKTFSSEESNSKS) are enriched in polar residues.

This sequence belongs to the DNA mismatch repair MutL/HexB family.

Its function is as follows. This protein is involved in the repair of mismatches in DNA. It is required for dam-dependent methyl-directed DNA mismatch repair. May act as a 'molecular matchmaker', a protein that promotes the formation of a stable complex between two or more DNA-binding proteins in an ATP-dependent manner without itself being part of a final effector complex. The protein is DNA mismatch repair protein MutL of Staphylococcus aureus (strain Mu3 / ATCC 700698).